We begin with the raw amino-acid sequence, 862 residues long: MDLPKAYDPKSVEPKWAEKWAKNPFVANPKSGKPPFVIFMPPPNVTGSLHMGHALDNSLQDALIRYKRMRGFEAVWLPGTDHAGIATQVVVERLLLKEGKTRHDLGREKFLERVWQWKEESGGTILKQLKRLGASADWSREAFTMDEKRSRAVRYAFSRYYHEGLAYRAPRLVNWCPRCETTLSDLEVETEPTPGKLYTLRYEVEGGGFIEIATVRPETVFADQAIAVHPEDERYRHLLGKRARIPLTEVWIPILADPAVEKDFGTGALKVTPAHDPLDYEIGERHGLKPVSVINLEGRMEGERVPEALRGLDRFEARRKAVELFREAGHLVKEEDYTIALATCSRCGTPIEYAIFPQWWLRMRPLAEEVLKGLRRGDIAFVPERWKKVNMDWLENVKDWNISRQLWWGHQIPAWYCEDCQAVNVPRPERYLEDPTSCEACGSPRLKRDEDVFDTWFSSALWPLSTLGWPEETEDLKAFYPGDVLVTGYDILFLWVSRMEVSGYHFMGERPFKTVLLHGLVLDEKGQKMSKSKGNVIDPLEMVERYGADALRFALIYLATGGQDIRLDLRWLEMARNFANKLYNAARFVLLSREGFQAKEDTPTLADRFMRSRLSRGVEEITALYEALDLAQAAREVYELVWSEFCDWYLEAAKPALKAGNAHTLRTLEEVLAVLLKLLHPMMPFLTSELYQALTGKEELALEAWPEPGGRDEEAERAFEALKQAVTAVRALKAEAGLPPAQEVRVYLEGETAPVEENLEVFRFLSRADLLPERPAKALVKAMPRVTARMPLEGLLDVEEWRRRQEKRLKELLALAERSQRKLASPGFREKAPKEVVEAEEARLKENLEQAERIREALSQIG.

Positions 44–53 (NVTGSLHMGH) match the 'HIGH' region motif. Zn(2+) is bound by residues cysteine 176, cysteine 179, cysteine 344, cysteine 347, cysteine 417, cysteine 420, cysteine 438, and cysteine 441. The 'KMSKS' region motif lies at 528 to 532 (KMSKS). ATP is bound at residue lysine 531. The stretch at 802 to 862 (RRRQEKRLKE…RIREALSQIG (61 aa)) forms a coiled coil.

It belongs to the class-I aminoacyl-tRNA synthetase family. ValS type 1 subfamily. As to quaternary structure, monomer. Requires Zn(2+) as cofactor.

Its subcellular location is the cytoplasm. It catalyses the reaction tRNA(Val) + L-valine + ATP = L-valyl-tRNA(Val) + AMP + diphosphate. Functionally, catalyzes the attachment of valine to tRNA(Val). As ValRS can inadvertently accommodate and process structurally similar amino acids such as threonine, to avoid such errors, it has a 'posttransfer' editing activity that hydrolyzes mischarged Thr-tRNA(Val) in a tRNA-dependent manner. In Thermus thermophilus (strain ATCC 27634 / DSM 579 / HB8), this protein is Valine--tRNA ligase.